Here is a 191-residue protein sequence, read N- to C-terminus: Thymidylate kinase (191 aa).

7-14 lines the ATP pocket; the sequence is GIDTCGKS.

Belongs to the thymidylate kinase family.

It carries out the reaction dTMP + ATP = dTDP + ADP. In terms of biological role, phosphorylation of dTMP to form dTDP in both de novo and salvage pathways of dTTP synthesis. The sequence is that of Thymidylate kinase from Sulfurovum sp. (strain NBC37-1).